A 61-amino-acid polypeptide reads, in one-letter code: Metallothionein-1L (61 aa).

Residues 1–29 (MDPNCSCATGGSCSCASSCKCKECKCTSC) are beta. Residues C5, C7, C13, C15, C19, C21, C24, C26, C29, C33, C34, C36, C37, C41, C44, C48, C50, C57, C59, and C60 each coordinate a divalent metal cation. Residues 30–61 (KKSCCSCCPMGCAKCAQGCVCKGASEKCSCCA) form an alpha region.

Belongs to the metallothionein superfamily. Type 1 family. Monomer. As to expression, expressed in reticulocytes.

Functionally, metallothioneins have a high content of cysteine residues that bind various heavy metals; these proteins are transcriptionally regulated by both heavy metals and glucocorticoids. This chain is Metallothionein-1L (MT1L), found in Homo sapiens (Human).